Here is a 207-residue protein sequence, read N- to C-terminus: Small ribosomal subunit protein uS4c (207 aa).

The 62-residue stretch at 92–153 (MRLDNILFRL…PKTYQSILSK (62 aa)) folds into the S4 RNA-binding domain.

Belongs to the universal ribosomal protein uS4 family. In terms of assembly, part of the 30S ribosomal subunit. Contacts protein S5. The interaction surface between S4 and S5 is involved in control of translational fidelity.

It localises to the plastid. The protein resides in the chloroplast. Its function is as follows. One of the primary rRNA binding proteins, it binds directly to 16S rRNA where it nucleates assembly of the body of the 30S subunit. In terms of biological role, with S5 and S12 plays an important role in translational accuracy. This is Small ribosomal subunit protein uS4c (rps4) from Equisetum laevigatum (Smooth horsetail).